A 684-amino-acid chain; its full sequence is Collagen alpha-3(IX) chain (684 aa).

The N-terminal stretch at Met1–Ala25 is a signal peptide. 2 disordered regions span residues Gln26–Ser521 and Leu548–Ser665. The interval Gly29 to Glu519 is triple-helical region 3 (COL3). Pro residues-rich tracts occupy residues Pro31 to Lys42 and Pro55 to Lys64. A compositionally biased stretch (low complexity) spans Ala66–Pro82. A compositionally biased stretch (gly residues) spans Gly130 to Gly139. Composition is skewed to pro residues over residues Pro140–His161 and Ile177–Met188. Basic and acidic residues predominate over residues Glu200 to Asp212. The segment covering Leu221–Pro237 has biased composition (low complexity). Composition is skewed to basic and acidic residues over residues Ala264 to Leu282 and Ser344 to Glu356. The Cell attachment site motif lies at Arg423–Asp425. Asn483 carries an N-linked (GlcNAc...) asparagine glycan. Residues Leu498–Pro507 are compositionally biased toward low complexity. The tract at residues Ala520–Pro550 is nonhelical region 3 (NC3). The segment at Gly551–Ser630 is triple-helical region 2 (COL2). Residues Pro558–Pro568 are compositionally biased toward pro residues. Residues Ser570–Thr586 are compositionally biased toward low complexity. Positions Arg601–Asp603 match the Cell attachment site motif. Low complexity predominate over residues Asp617–Gly628. Residues Lys631–Asp632 are nonhelical region 2 (NC2). The interval Gly633–Ile661 is triple-helical region 1 (COL1). Residues Cys662–Ser684 form a nonhelical region 1 (NC1) region.

Belongs to the fibril-associated collagens with interrupted helices (FACIT) family. As to quaternary structure, heterotrimer of an alpha 1(IX), an alpha 2(IX) and an alpha 3(IX) chain. In terms of processing, covalently linked to the telopeptides of type II collagen by lysine-derived cross-links. Prolines at the third position of the tripeptide repeating unit (G-X-Y) are hydroxylated in some or all of the chains.

The protein resides in the secreted. It is found in the extracellular space. Its subcellular location is the extracellular matrix. Its function is as follows. Structural component of hyaline cartilage and vitreous of the eye. In Homo sapiens (Human), this protein is Collagen alpha-3(IX) chain (COL9A3).